A 266-amino-acid polypeptide reads, in one-letter code: MEWFEALILGLIQGLTEYLPVSSSGHLAIGSALFGIEGEENLAFTIVVHVATVFSTLVILWKEIDWIFRGLFKFEMNSETRYVINILISMIPIGIVGVFFKDEVEAIFGSGLLIVGCMLLLTAALLSFSYYAKPRQKENISMKDAFIIGLAQACAVLPGLSRSGSTIATGLLLGDNKAKLAQFSFLMVIPPILGEALLDGMKMIKGEAIAGDIPTLSLIVGFIAAFVSGCLACKWMINIVKKGKLIYFAIYCAIVGVVTIVVSQLQ.

7 consecutive transmembrane segments (helical) span residues 41–61 (NLAF…VILW), 82–102 (YVIN…FFKD), 106–126 (AIFG…AALL), 140–160 (ISMK…LPGL), 180–200 (LAQF…LLDG), 213–233 (IPTL…CLAC), and 245–265 (LIYF…VSQL).

The protein belongs to the UppP family.

The protein resides in the cell inner membrane. It carries out the reaction di-trans,octa-cis-undecaprenyl diphosphate + H2O = di-trans,octa-cis-undecaprenyl phosphate + phosphate + H(+). Functionally, catalyzes the dephosphorylation of undecaprenyl diphosphate (UPP). Confers resistance to bacitracin. The chain is Undecaprenyl-diphosphatase from Bacteroides fragilis (strain ATCC 25285 / DSM 2151 / CCUG 4856 / JCM 11019 / LMG 10263 / NCTC 9343 / Onslow / VPI 2553 / EN-2).